A 288-amino-acid polypeptide reads, in one-letter code: GTP-binding protein 8 (288 aa).

The EngB-type G domain occupies 109 to 282 (HRPEVCFIGR…RCFIADITGN (174 aa)). Residues 117–124 (GRSNVGKS), 146–150 (GHTKK), 164–167 (DMPG), 226–229 (TKID), and 261–263 (VSA) each bind GTP. Mg(2+)-binding residues include Ser-124 and Thr-148.

It belongs to the TRAFAC class TrmE-Era-EngA-EngB-Septin-like GTPase superfamily. EngB GTPase family. Requires Mg(2+) as cofactor.

The chain is GTP-binding protein 8 (GTPBP8) from Bos taurus (Bovine).